An 870-amino-acid chain; its full sequence is Dynamin-2 (870 aa).

The 267-residue stretch at 28-294 folds into the Dynamin-type G domain; the sequence is HLDLPQIAVV…LTNHIRESLP (267 aa). The segment at 38-45 is G1 motif; it reads GGQSAGKS. GDP-binding residues include Ser41, Gly43, Lys44, Ser45, Ser46, Arg59, and Gly60. The tract at residues 64-66 is G2 motif; it reads VTR. Positions 136–139 are G3 motif; it reads DLPG. The interval 205-208 is G4 motif; it reads TKLD. GDP contacts are provided by Lys206, Asp208, and Asp211. Position 231 is a phosphotyrosine (Tyr231). Residues 235–238 are G5 motif; the sequence is VNRS. Residues Asn236, Arg237, and Gln239 each contribute to the GDP site. An N6-acetyllysine modification is found at Lys299. A PH domain is found at 519-625; sequence LVIRRGWLTI…WKASFLRAGV (107 aa). A Phosphotyrosine modification is found at Tyr597. Lys598 is subject to N6-acetyllysine. A GED domain is found at 653–744; that stretch reads VETIRNLVDS…IIGDISTSTV (92 aa). The segment at 741-870 is disordered; that stretch reads TSTVSTPVPP…IRPAEPSLLD (130 aa). Thr755 bears the Phosphothreonine mark. A compositionally biased stretch (polar residues) spans 756 to 767; sequence WLQNTSGHSPTP. Ser764 is subject to Phosphoserine; by CDK1. The segment covering 826-846 has biased composition (pro residues); that stretch reads SAPPQIPSRPARIPPGIPPGV. Residues 847–864 are compositionally biased toward low complexity; sequence PSRRAPAAPSRPTIIRPA.

The protein belongs to the TRAFAC class dynamin-like GTPase superfamily. Dynamin/Fzo/YdjA family. As to quaternary structure, oligomerizes into a helical polymer that self-assembles around the vesicle membrane, when associated to the menbrane through lipid binding. Interacts with SHANK1 and SHANK2. Interacts with SNX9. Interacts (via C-terminal proline-rich domain (PRD)) with SNX18 (via SH3 domain); this interaction regulates ATG9A and ATG16L1 trafficking from recycling endosomes to sites of autophagosome formation. Interacts with SNX33 (via SH3 domain). Interacts with MYO1E (via SH3 domain). Interacts with PSTPIP1 (via SH3 domain). Interacts with CTNND2. Interacts (via C-terminal proline-rich domain (PRD)) with BIN1 (via SH3 domain); this interaction allows the recruitment of DNM2 to the membrane tubules and inhibits self-assembly-stimulated GTPase activity on the membrane. Interacts with GABARAP, GABARAPL1 and GABARAPL2. Interacts with MAP1LC3B (the lipidate and non-lipidated LC3 form); this interaction mediates recycling endosome scission leading to autophagosome release. Interacts with ITSN1. Interacts (via C-terminal proline-rich domain (PRD)) with SH3BP4 (via SH3 domain); this interaction controls the GTPase activity and is prevented by EGFR-induced tyrosine phosphorylation of either DNM2 or SH3BP4. Interacts with MYOF. May interact with PIK3C3. May be a component of a complex composed of RAB5A (in GDP-bound form), DYN2 and PIK3C3. Interacts with SDC4; this interaction is markedly enhanced at focal ahesion site upon induction of focal adhesions and stress-fiber formation. Interacts with ACTN1. Interacts with CTTN; this interaction stimulates the intrinsic GTPase activity of DNM2 and stabilizes the association of DNM2 and actin filaments; in addition this interaction is stimulated by ligand binding to the receptor, leading to the recruitment of the DNM2-CTTN complex to the sequestered receptor-ligand complex to its internalization. Interacts with NOSTRIN (via SH3 domain); this interaction allows the recruitment of NOS3 to dynamin-positive structures. Interacts with TUBG1; this interaction may participate in centrosome cohesion. Post-translationally, phosphorylation at Ser-848 by GSK3-alpha relieves the inhibition of BIN1 and promotes endocytosis. Phosphorylation at Ser-764 by CDK1 is greatly increased upon mitotic entry. It regulates cytokinesis downstream of calcineurin, and does not affect clathrin-mediated endocytosis. Dephosphorylated by calcineurin/PP2 during cytokinesis in a Ca(2+)- and calmodulin-dependent manner. Phosphorylated on tyrosine residues by EGFR. Phosphorylated on tyrosine residues after activation of SRC. In terms of tissue distribution, expressed in most tissues during embryonic development, including the peripheral nervous system although no expression is evident in skeletal muscle or heart.

It is found in the cytoplasm. The protein localises to the cytoskeleton. Its subcellular location is the cytoplasmic vesicle. It localises to the clathrin-coated vesicle. The protein resides in the cell projection. It is found in the uropodium. The protein localises to the endosome. Its subcellular location is the microtubule organizing center. It localises to the centrosome. The protein resides in the centriole. It is found in the recycling endosome. The protein localises to the phagocytic cup. Its subcellular location is the phagosome membrane. It localises to the podosome. The protein resides in the cell junction. It is found in the postsynaptic density. The protein localises to the synapse. Its subcellular location is the synaptosome. It localises to the midbody. The protein resides in the membrane. It is found in the clathrin-coated pit. The enzyme catalyses GTP + H2O = GDP + phosphate + H(+). Functionally, catalyzes the hydrolysis of GTP and utilizes this energy to mediate vesicle scission at plasma membrane during endocytosis and filament remodeling at many actin structures during organization of the actin cytoskeleton. Plays an important role in vesicular trafficking processes, namely clathrin-mediated endocytosis (CME), exocytic and clathrin-coated vesicle from the trans-Golgi network, and PDGF stimulated macropinocytosis. During vesicular trafficking process, associates to the membrane, through lipid binding, and self-assembles into ring-like structure through oligomerization to form a helical polymer around the vesicle membrane and leading to vesicle scission. Plays a role in organization of the actin cytoskeleton by mediating arrangement of stress fibers and actin bundles in podocytes. During organization of the actin cytoskeleton, self-assembles into ring-like structure that directly bundles actin filaments to form typical membrane tubules decorated with dynamin spiral polymers. Self-assembly increases GTPase activity and the GTP hydrolysis causes the rapid depolymerization of dynamin spiral polymers, and results in dispersion of actin bundles. Remodels, through its interaction with CTTN, bundled actin filaments in a GTPase-dependent manner and plays a role in orchestrating the global actomyosin cytoskeleton. The interaction with CTTN stabilizes the interaction of DNM2 and actin filaments and stimulates the intrinsic GTPase activity that results in actin filament-barbed ends and increases the sensitivity of filaments in bundles to the actin depolymerizing factor, CFL1. Plays a role in the autophagy process, by participating in the formation of ATG9A vesicles destined for the autophagosomes through its interaction with SNX18, by mediating recycling endosome scission leading to autophagosome release through MAP1LC3B interaction. Also regulates maturation of apoptotic cell corpse-containing phagosomes by recruiting PIK3C3 to the phagosome membrane. Also plays a role in cytokinesis. May participate in centrosome cohesion through its interaction with TUBG1. Plays a role in the regulation of neuron morphology, axon growth and formation of neuronal growth cones. Involved in membrane tubulation. The chain is Dynamin-2 from Mus musculus (Mouse).